A 139-amino-acid polypeptide reads, in one-letter code: Chorion protein S16 (139 aa).

Residues 1 to 21 (MSVNYMRLLCLMACCFSVCLA) form the signal peptide.

Belongs to the chorion protein S16 family.

It is found in the secreted. In terms of biological role, chorion membrane (egg shell) protein; plays a role in protecting the egg from the environment. This is Chorion protein S16 (Cp16) from Drosophila virilis (Fruit fly).